A 421-amino-acid polypeptide reads, in one-letter code: Succinate--CoA ligase [ADP-forming] subunit beta, mitochondrial (421 aa).

Residues 1 to 26 (MRGLVNKLVSRSLSISGKWQNQQLRR) constitute a mitochondrion transit peptide. Residues 35 to 278 (AELMGKYGVN…PTQEDPREVA (244 aa)) form the ATP-grasp domain. ATP-binding positions include Lys-74, 81–83 (GRG), and Glu-141. The Mg(2+) site is built by Asn-233 and Asp-247. Substrate is bound by residues Asn-298 and 355 to 357 (GIM).

The protein belongs to the succinate/malate CoA ligase beta subunit family. As to quaternary structure, heterodimer of an alpha and a beta subunit. Mg(2+) is required as a cofactor.

The protein resides in the mitochondrion. It catalyses the reaction succinate + ATP + CoA = succinyl-CoA + ADP + phosphate. Its pathway is carbohydrate metabolism; tricarboxylic acid cycle; succinate from succinyl-CoA (ligase route): step 1/1. Its function is as follows. Succinyl-CoA synthetase functions in the citric acid cycle (TCA), coupling the hydrolysis of succinyl-CoA to the synthesis of ATP and thus represents the only step of substrate-level phosphorylation in the TCA. The beta subunit provides nucleotide specificity of the enzyme and binds the substrate succinate, while the binding sites for coenzyme A and phosphate are found in the alpha subunit. In Arabidopsis thaliana (Mouse-ear cress), this protein is Succinate--CoA ligase [ADP-forming] subunit beta, mitochondrial.